Here is a 231-residue protein sequence, read N- to C-terminus: Urease subunit gamma/beta (231 aa).

The segment at 1-101 is urease gamma; sequence MLLTPTELER…LVTVHQPIRP (101 aa). The interval 102-231 is urease beta; sequence GKLPLAVMPT…RARAQHFKGA (130 aa).

This sequence in the N-terminal section; belongs to the urease gamma subunit family. In the C-terminal section; belongs to the urease beta subunit family. Heterohexamer of 3 UreC (alpha) and 3 UreAB (gamma/beta) subunits.

Its subcellular location is the cytoplasm. The enzyme catalyses urea + 2 H2O + H(+) = hydrogencarbonate + 2 NH4(+). It participates in nitrogen metabolism; urea degradation; CO(2) and NH(3) from urea (urease route): step 1/1. The polypeptide is Urease subunit gamma/beta (Pseudomonas syringae pv. tomato (strain ATCC BAA-871 / DC3000)).